An 81-amino-acid chain; its full sequence is MQMKATILIVLVALFMIQQSEAGWLRKAAKSVGKFYYKHKYYIKAAWQIGKHALGDMTDEEFQDFMKEVEQAREEELQSRQ.

Residues 1–22 (MQMKATILIVLVALFMIQQSEA) form the signal peptide. W24 is modified (6'-bromotryptophan). The residue at position 26 (R26) is a 3,4-dihydroxyarginine. 3 positions are modified to 4,5-dihydroxylysine: K27, K30, and K34. Y36 and Y37 each carry 3',4'-dihydroxyphenylalanine. K38 bears the 4,5-dihydroxylysine mark. K40 bears the 5-hydroxylysine mark. A 3',4'-dihydroxyphenylalanine mark is found at Y41 and Y42. The residue at position 44 (K44) is a 5-hydroxylysine. L54 carries the leucine amide modification. A propeptide spans 56-81 (DMTDEEFQDFMKEVEQAREEELQSRQ) (removed in mature form).

Post-translationally, contains L-DOPA (3',4'-dihydroxyphenylalanine). As to expression, hemocytes and pharyngeal tissues.

The protein resides in the secreted. Bactericidal against several Gram-positive and Gram-negative bacteria. Plays a significant role in the innate immune mechanisms of S.clava. The chain is Styelin-D from Styela clava (Sea squirt).